A 66-amino-acid polypeptide reads, in one-letter code: Large ribosomal subunit protein bL35 (66 aa).

Residues 1-26 (MPKMKTHRGAAKRFKKTGTGKLKRGH) show a composition bias toward basic residues. Residues 1–48 (MPKMKTHRGAAKRFKKTGTGKLKRGHAYTSHLFANKTQKQKRKLRKAT) are disordered.

Belongs to the bacterial ribosomal protein bL35 family.

The chain is Large ribosomal subunit protein bL35 from Geobacillus sp. (strain WCH70).